Consider the following 519-residue polypeptide: MASTFNPRECKLSKQEGQNYGFFLRIEKDTDGHLIRVIEEGSPAEKAGLLDGDRVLRINGVFVDKEEHAQVVELVRKSGNSVTLLVLDGDSYEKAVKNQVDLKELDQSQREAALNDKKPGPGMNGAVEPCAQPRLCYLVKEGNSFGFSLKTIQGKKGVYLTDIMPQGVAMKAGVLADDHLIEVNGENVENASHEEVVEKVTKSGSRIMFLLVDKETARCHSEQKTQFKRETASLKLLPHQPRVVVIKKGSNGYGFYLRAGPEQKGQIIKDIEPGSPAEAAGLKNNDLVVAVNGKSVEALDHDGVVEMIRKGGDQTTLLVLDKEAESIYSLARFSPLLYCQSQELPNGSVKEGPAPIPAPLEATGSEPTEDAEGHKPKLCRLLKEDDSYGFHLNAIRGQPGSFVKEVQQGGPADKAGLENEDVIIEVNGENVQEEPYDRVVERIKSSGKHVTLLVCGKMAYSYFQAKKIPIVSSMAEPLVAGPDEKGETSAESEHDAHPAKDRTLSTASHSSSNSEDTEM.

Residues 9–90 (ECKLSKQEGQ…SVTLLVLDGD (82 aa)) enclose the PDZ 1 domain. Phosphoserine is present on residues serine 108, serine 148, serine 192, serine 250, serine 334, and serine 348. PDZ domains follow at residues 128–215 (EPCA…VDKE) and 243–323 (VVVI…LDKE). A disordered region spans residues 348–374 (SVKEGPAPIPAPLEATGSEPTEDAEGH). Residues 378-458 (LCRLLKEDDS…HVTLLVCGKM (81 aa)) form the PDZ 4 domain. Phosphothreonine occurs at positions 451 and 488. Residues 479–519 (VAGPDEKGETSAESEHDAHPAKDRTLSTASHSSSNSEDTEM) form a disordered region. The span at 482 to 503 (PDEKGETSAESEHDAHPAKDRT) shows a compositional bias: basic and acidic residues. Serine 489 and serine 492 each carry phosphoserine. Threonine 503 is subject to Phosphothreonine. The span at 505-519 (STASHSSSNSEDTEM) shows a compositional bias: low complexity. 5 positions are modified to phosphoserine: serine 508, serine 510, serine 511, serine 512, and serine 514.

The protein belongs to the NHER family. Interacts with PDZK1IP1 and ABCC2. Binds to the C-terminal region of SLC26A3. Interacts (via C-terminal PDZ domain) with SLC26A6 (via C-terminal domain). Interacts (via C-terminal PDZ domain) with SLC9A3 (via C-terminal domain). Component of a complex, composed of PDZK1, SYNGAP1, KLHL17 and NMDA receptors. Interacts (via PDZ1 domain) directly with KLHL17; the interaction is important for integrity of actin cytoskeleton structures in neurons. Forms a heterodimeric complex with NHERF1. Interacts with AKAP2, BCR, CFTR, SLCO1A1, SLC22A12, SLC22A4, SLC22A5, SLC26A6, NHERF2 and SLC17A1. Interacts (via the first PDZ domain) with PTGIR (via non-isoprenylated C-terminus). Interacts (via PDZ domains 1 and 3) with SCARB1 (C-terminal domain). Interacts (via PDZ domains 1 and 3) with SLC5A8 (via PDZ-binding motif); interaction increases nicotinate transport activity of SLC5A8. In terms of tissue distribution, expressed in kidney, liver, small intestine. brain, lung, and testis (at protein level).

Its subcellular location is the membrane. It is found in the cell membrane. Its function is as follows. A scaffold protein that connects plasma membrane proteins and regulatory components, regulating their surface expression in epithelial cells apical domains. May be involved in the coordination of a diverse range of regulatory processes for ion transport and second messenger cascades. In complex with NHERF1, may cluster proteins that are functionally dependent in a mutual fashion and modulate the trafficking and the activity of the associated membrane proteins. May play a role in the cellular mechanisms associated with multidrug resistance through its interaction with ABCC2 and PDZK1IP1. May potentiate the CFTR chloride channel activity. Required for normal cell-surface expression of SCARB1. Plays a role in maintaining normal plasma cholesterol levels via its effects on SCARB1. Plays a role in the normal localization and function of the chloride-anion exchanger SLC26A6 to the plasma membrane in the brush border of the proximal tubule of the kidney. May be involved in the regulation of proximal tubular Na(+)-dependent inorganic phosphate cotransport therefore playing an important role in tubule function. This is Na(+)/H(+) exchange regulatory cofactor NHE-RF3 (Pdzk1) from Mus musculus (Mouse).